The chain runs to 1191 residues: DNA-directed RNA polymerase subunit beta (1191 aa).

Basic and acidic residues predominate over residues 1171 to 1181 (RVKQEAEEKQA). Residues 1171–1191 (RVKQEAEEKQAEQVSEVVQED) are disordered. A compositionally biased stretch (low complexity) spans 1182-1191 (EQVSEVVQED).

It belongs to the RNA polymerase beta chain family. In terms of assembly, the RNAP catalytic core consists of 2 alpha, 1 beta, 1 beta' and 1 omega subunit. When a sigma factor is associated with the core the holoenzyme is formed, which can initiate transcription.

The enzyme catalyses RNA(n) + a ribonucleoside 5'-triphosphate = RNA(n+1) + diphosphate. DNA-dependent RNA polymerase catalyzes the transcription of DNA into RNA using the four ribonucleoside triphosphates as substrates. The protein is DNA-directed RNA polymerase subunit beta of Streptococcus agalactiae serotype Ia (strain ATCC 27591 / A909 / CDC SS700).